Here is a 211-residue protein sequence, read N- to C-terminus: Probable nicotinate-nucleotide adenylyltransferase (211 aa).

It belongs to the NadD family.

The enzyme catalyses nicotinate beta-D-ribonucleotide + ATP + H(+) = deamido-NAD(+) + diphosphate. It participates in cofactor biosynthesis; NAD(+) biosynthesis; deamido-NAD(+) from nicotinate D-ribonucleotide: step 1/1. In terms of biological role, catalyzes the reversible adenylation of nicotinate mononucleotide (NaMN) to nicotinic acid adenine dinucleotide (NaAD). This is Probable nicotinate-nucleotide adenylyltransferase from Gemmatimonas aurantiaca (strain DSM 14586 / JCM 11422 / NBRC 100505 / T-27).